The chain runs to 76 residues: Defensin-like protein 5 (76 aa).

The N-terminal stretch at 1–29 (MKVSPRLNSALLLLFMILATVMGLVTVEA) is a signal peptide. 4 disulfides stabilise this stretch: cysteine 32/cysteine 76, cysteine 43/cysteine 63, cysteine 49/cysteine 70, and cysteine 53/cysteine 72.

This sequence belongs to the DEFL family.

It is found in the secreted. Its function is as follows. Confers broad-spectrum resistance to pathogens. This is Defensin-like protein 5 (PDF2.4) from Arabidopsis thaliana (Mouse-ear cress).